A 374-amino-acid chain; its full sequence is Glutamate 5-kinase (374 aa).

Lysine 16 contributes to the ATP binding site. Substrate contacts are provided by serine 56, aspartate 143, and asparagine 155. 175–176 contacts ATP; the sequence is TD. A PUA domain is found at 282–360; sequence RGRVVLDAGA…SEIEAVLGYV (79 aa).

It belongs to the glutamate 5-kinase family.

The protein resides in the cytoplasm. The catalysed reaction is L-glutamate + ATP = L-glutamyl 5-phosphate + ADP. Its pathway is amino-acid biosynthesis; L-proline biosynthesis; L-glutamate 5-semialdehyde from L-glutamate: step 1/2. In terms of biological role, catalyzes the transfer of a phosphate group to glutamate to form L-glutamate 5-phosphate. This is Glutamate 5-kinase from Ralstonia pickettii (strain 12J).